The chain runs to 127 residues: Probable 4-amino-4-deoxy-L-arabinose-phosphoundecaprenol flippase subunit ArnF (127 aa).

A helical membrane pass occupies residues 1 to 21; the sequence is MMGYFWALMSVLLVSGAQLMM. Topologically, residues 22 to 48 are periplasmic; it reads KWAMVSLPPVGQTDALMSAFMSVTPGA. The chain crosses the membrane as a helical span at residues 49-69; it reads VALVIGLFAYVFSMGCWYMAL. The Cytoplasmic portion of the chain corresponds to 70–77; sequence RRIALSKA. A helical membrane pass occupies residues 78 to 98; it reads YPLLSLSYVLVWAAAIGLPWL. The Periplasmic portion of the chain corresponds to 99-101; the sequence is HEP. Residues 102–122 traverse the membrane as a helical segment; it reads FSVGKLAGVSVIFVGLLLVCL. Over 123 to 127 the chain is Cytoplasmic; the sequence is PDKKS.

Belongs to the ArnF family. In terms of assembly, heterodimer of ArnE and ArnF.

The protein resides in the cell inner membrane. The protein operates within bacterial outer membrane biogenesis; lipopolysaccharide biosynthesis. In terms of biological role, translocates 4-amino-4-deoxy-L-arabinose-phosphoundecaprenol (alpha-L-Ara4N-phosphoundecaprenol) from the cytoplasmic to the periplasmic side of the inner membrane. This chain is Probable 4-amino-4-deoxy-L-arabinose-phosphoundecaprenol flippase subunit ArnF, found in Enterobacter sp. (strain 638).